A 654-amino-acid polypeptide reads, in one-letter code: Probable Xaa-Pro aminopeptidase P (654 aa).

Residues aspartate 451, aspartate 462, glutamate 560, and glutamate 574 each coordinate Mn(2+).

This sequence belongs to the peptidase M24B family. Mn(2+) serves as cofactor.

The enzyme catalyses Release of any N-terminal amino acid, including proline, that is linked to proline, even from a dipeptide or tripeptide.. Catalyzes the removal of a penultimate prolyl residue from the N-termini of peptides. This Botryotinia fuckeliana (strain B05.10) (Noble rot fungus) protein is Probable Xaa-Pro aminopeptidase P (ampp).